The following is an 873-amino-acid chain: Alanine--tRNA ligase (873 aa).

Residues H562, H566, C666, and H670 each contribute to the Zn(2+) site.

The protein belongs to the class-II aminoacyl-tRNA synthetase family. Requires Zn(2+) as cofactor.

The protein localises to the cytoplasm. It carries out the reaction tRNA(Ala) + L-alanine + ATP = L-alanyl-tRNA(Ala) + AMP + diphosphate. Its function is as follows. Catalyzes the attachment of alanine to tRNA(Ala) in a two-step reaction: alanine is first activated by ATP to form Ala-AMP and then transferred to the acceptor end of tRNA(Ala). Also edits incorrectly charged Ser-tRNA(Ala) and Gly-tRNA(Ala) via its editing domain. This Dichelobacter nodosus (strain VCS1703A) protein is Alanine--tRNA ligase.